A 924-amino-acid chain; its full sequence is Periplasmic nitrate reductase (924 aa).

A signal peptide (tat-type signal) is located at residues 1-30 (MNRRDFIKNTAIASAASVAGLSVPSSMLGA). The region spanning 35–91 (WKWDKAVCRFCGTGCGIMIARKDGKIVATKGDPAAPVNRGLNCIKGYFNAKIMYGED) is the 4Fe-4S Mo/W bis-MGD-type domain. Residues C42, C45, C49, and C77 each coordinate [4Fe-4S] cluster. Residues K79, Q147, N172, C176, 209-216 (WGANMAEM), M417, Q421, N527, 552-553 (SD), K575, D602, and 814-823 (TGRVLEHWHS) each bind Mo-bis(molybdopterin guanine dinucleotide). Substrate is bound at residue W890. 2 residues coordinate Mo-bis(molybdopterin guanine dinucleotide): N898 and K915.

This sequence belongs to the prokaryotic molybdopterin-containing oxidoreductase family. NasA/NapA/NarB subfamily. Component of the periplasmic nitrate reductase NapAB complex composed of NapA and NapB. Requires [4Fe-4S] cluster as cofactor. Mo-bis(molybdopterin guanine dinucleotide) serves as cofactor. Post-translationally, predicted to be exported by the Tat system. The position of the signal peptide cleavage has not been experimentally proven.

The protein localises to the periplasm. The catalysed reaction is 2 Fe(II)-[cytochrome] + nitrate + 2 H(+) = 2 Fe(III)-[cytochrome] + nitrite + H2O. Its function is as follows. Catalytic subunit of the periplasmic nitrate reductase complex NapAB. Receives electrons from NapB and catalyzes the reduction of nitrate to nitrite. This chain is Periplasmic nitrate reductase, found in Campylobacter jejuni subsp. jejuni serotype O:2 (strain ATCC 700819 / NCTC 11168).